The primary structure comprises 453 residues: Ribulose bisphosphate carboxylase large chain (453 aa).

The propeptide occupies 1–2 (MS). P3 is modified (N-acetylproline). K14 carries the post-translational modification N6,N6,N6-trimethyllysine. 2 residues coordinate substrate: N123 and T173. The active-site Proton acceptor is the K175. Substrate is bound at residue K177. K201, D203, and E204 together coordinate Mg(2+). K201 carries the N6-carboxylysine modification. H294 serves as the catalytic Proton acceptor. Positions 295, 327, and 379 each coordinate substrate.

This sequence belongs to the RuBisCO large chain family. Type I subfamily. Heterohexadecamer of 8 large chains and 8 small chains; disulfide-linked. The disulfide link is formed within the large subunit homodimers. Mg(2+) is required as a cofactor. Post-translationally, the disulfide bond which can form in the large chain dimeric partners within the hexadecamer appears to be associated with oxidative stress and protein turnover.

It is found in the plastid. Its subcellular location is the chloroplast. The enzyme catalyses 2 (2R)-3-phosphoglycerate + 2 H(+) = D-ribulose 1,5-bisphosphate + CO2 + H2O. It carries out the reaction D-ribulose 1,5-bisphosphate + O2 = 2-phosphoglycolate + (2R)-3-phosphoglycerate + 2 H(+). RuBisCO catalyzes two reactions: the carboxylation of D-ribulose 1,5-bisphosphate, the primary event in carbon dioxide fixation, as well as the oxidative fragmentation of the pentose substrate in the photorespiration process. Both reactions occur simultaneously and in competition at the same active site. The sequence is that of Ribulose bisphosphate carboxylase large chain from Rubia tinctorum (Madder).